A 151-amino-acid chain; its full sequence is Protein SprT-like (151 aa).

The SprT-like domain occupies 7–146 (QSLTESIAIK…CGRCGGILKL (140 aa)). Position 67 (His67) interacts with Zn(2+). Glu68 is a catalytic residue. His71 contacts Zn(2+).

It belongs to the SprT family. Zn(2+) is required as a cofactor.

It is found in the cytoplasm. This Staphylococcus epidermidis (strain ATCC 35984 / DSM 28319 / BCRC 17069 / CCUG 31568 / BM 3577 / RP62A) protein is Protein SprT-like.